The primary structure comprises 188 residues: Probable manganese efflux pump MntP (188 aa).

A run of 5 helical transmembrane segments spans residues 3–23 (ITAT…ASIG), 66–86 (LEWN…RMII), 106–128 (WLLV…GLAF), 143–163 (ATLI…SIIG), and 168–188 (ILGG…HFHG).

The protein belongs to the MntP (TC 9.B.29) family.

The protein resides in the cell inner membrane. Its function is as follows. Probably functions as a manganese efflux pump. This Shigella flexneri serotype 5b (strain 8401) protein is Probable manganese efflux pump MntP.